We begin with the raw amino-acid sequence, 449 residues long: Flavonol 7-O-beta-glucosyltransferase UGT74F1 (449 aa).

The active-site Proton acceptor is H18. An anthocyanidin is bound at residue H18. The active-site Charge relay is the D111. UDP-alpha-D-glucose is bound by residues T133, Q327, H342, W345, N346, S347, E350, D366, and Q367.

It belongs to the UDP-glycosyltransferase family.

The enzyme catalyses a 7-O-hydroxy-flavonol + UDP-alpha-D-glucose = a flavonol 7-O-beta-D-glucoside + UDP + H(+). In terms of biological role, possesses quercetin 7-O-glucosyltransferase and 4'-O-glucosyltransferase activities in vitro. Also active in vitro on benzoates and benzoate derivatives. Has low affinity for the tryptophan precursor anthranilate. Catalyzes the formation of anthranilate glucose ester. Is a minor source of this activity in the plant. The sequence is that of Flavonol 7-O-beta-glucosyltransferase UGT74F1 from Arabidopsis thaliana (Mouse-ear cress).